The chain runs to 326 residues: tRNA-modifying protein YgfZ (326 aa).

Folate-binding residues include Trp-27 and Trp-189.

The protein belongs to the tRNA-modifying YgfZ family.

It is found in the cytoplasm. In terms of biological role, folate-binding protein involved in regulating the level of ATP-DnaA and in the modification of some tRNAs. It is probably a key factor in regulatory networks that act via tRNA modification, such as initiation of chromosomal replication. This is tRNA-modifying protein YgfZ from Salmonella paratyphi A (strain AKU_12601).